The primary structure comprises 392 residues: Tryptophan synthase beta chain (392 aa).

Position 84 is an N6-(pyridoxal phosphate)lysine (K84).

This sequence belongs to the TrpB family. As to quaternary structure, tetramer of two alpha and two beta chains. It depends on pyridoxal 5'-phosphate as a cofactor.

It catalyses the reaction (1S,2R)-1-C-(indol-3-yl)glycerol 3-phosphate + L-serine = D-glyceraldehyde 3-phosphate + L-tryptophan + H2O. It participates in amino-acid biosynthesis; L-tryptophan biosynthesis; L-tryptophan from chorismate: step 5/5. Functionally, the beta subunit is responsible for the synthesis of L-tryptophan from indole and L-serine. The protein is Tryptophan synthase beta chain (trpB) of Chlamydia trachomatis serovar D (strain ATCC VR-885 / DSM 19411 / UW-3/Cx).